A 276-amino-acid polypeptide reads, in one-letter code: Bis(5'-nucleosyl)-tetraphosphatase, symmetrical (276 aa).

The protein belongs to the Ap4A hydrolase family.

It catalyses the reaction P(1),P(4)-bis(5'-adenosyl) tetraphosphate + H2O = 2 ADP + 2 H(+). Hydrolyzes diadenosine 5',5'''-P1,P4-tetraphosphate to yield ADP. This Psychromonas ingrahamii (strain DSM 17664 / CCUG 51855 / 37) protein is Bis(5'-nucleosyl)-tetraphosphatase, symmetrical.